The chain runs to 274 residues: Large ribosomal subunit protein uL2 (274 aa).

A disordered region spans residues 221-254 (RGTAMNPADHPHGGGEGRTFGKHPVSPWGLPTKG).

The protein belongs to the universal ribosomal protein uL2 family. Part of the 50S ribosomal subunit. Forms a bridge to the 30S subunit in the 70S ribosome.

Functionally, one of the primary rRNA binding proteins. Required for association of the 30S and 50S subunits to form the 70S ribosome, for tRNA binding and peptide bond formation. It has been suggested to have peptidyltransferase activity; this is somewhat controversial. Makes several contacts with the 16S rRNA in the 70S ribosome. This is Large ribosomal subunit protein uL2 from Sulfurihydrogenibium sp. (strain YO3AOP1).